A 184-amino-acid chain; its full sequence is MSKLDNQNLIWIDLEMTGLDPEKERIIEVATIVTDKDLNILAEGPVLTVHQSNDLLNKMSDWCIKTHTENGLIERVKQSKLTERAVELQTIDFLKQWVPKGASPICGNSVAQDKRFLYKYMPDLADYFHYRHLDVSTLKELARRWKPDMLNAFNKKNTHLALDDIRESIEELKFYRTHFINLEK.

One can recognise an Exonuclease domain in the interval L9–L172. Y130 is a catalytic residue.

Belongs to the oligoribonuclease family.

It localises to the cytoplasm. Functionally, 3'-to-5' exoribonuclease specific for small oligoribonucleotides. The polypeptide is Oligoribonuclease (Actinobacillus pleuropneumoniae serotype 5b (strain L20)).